The primary structure comprises 212 residues: SOSS complex subunit B1 (212 aa).

The OB DNA-binding region spans 22–92; that stretch reads IVLETGRVTK…TLYTGRGGDL (71 aa). The segment at 110–212 is disordered; the sequence is EPNPEYNTQQ…GKETRRSSKR (103 aa). A compositionally biased stretch (polar residues) spans 114–130; sequence EYNTQQAPNKSVQNNDN. Thr117 carries the post-translational modification Phosphothreonine; by ATM. Over residues 131–148 the composition is skewed to low complexity; it reads SPTAPQATTGPPAASPAS. Polar residues predominate over residues 149 to 160; the sequence is ENQNGNGLSTQL. Low complexity predominate over residues 166 to 178; it reads PHPSHTPSHPPST.

The protein belongs to the SOSS-B family. SOSS-B1 subfamily. As to quaternary structure, component of the SOSS complex, composed of SOSS-B (SOSS-B1/NABP2 or SOSS-B2/NABP1), SOSS-A/INTS3 and SOSS-C/INIP. SOSS complexes containing SOSS-B1/NABP2 are more abundant than complexes containing SOSS-B2/NABP1. Directly interacts with ATM, SOSS-A/INTS3 and RAD51. Interacts with INTS7. Phosphorylated by ATM in response to DNA damage. Phosphorylation prevents degradation by the proteasome, hence stabilization of the protein and accumulation within cells. In terms of processing, ubiquitinated in a FBXL5-dependent manner, leading to proteasomal degradation.

The protein resides in the nucleus. In terms of biological role, component of the SOSS complex, a multiprotein complex that functions downstream of the MRN complex to promote DNA repair and G2/M checkpoint. In the SOSS complex, acts as a sensor of single-stranded DNA that binds to single-stranded DNA, in particular to polypyrimidines. The SOSS complex associates with DNA lesions and influences diverse endpoints in the cellular DNA damage response including cell-cycle checkpoint activation, recombinational repair and maintenance of genomic stability. Required for efficient homologous recombination-dependent repair of double-strand breaks (DSBs) and ATM-dependent signaling pathways. This chain is SOSS complex subunit B1 (Nabp2), found in Mus musculus (Mouse).